The chain runs to 111 residues: MFHLYLLLVFETRYTCLMKCSISTCSYRWLRRREWFCLIYSGCCRKILVIEGLQRSDVAFLFTRRTIMHYVPFRGLFCASCVGYFSIRCCSRCEHFCTKTPTKSFGTEAWS.

The first 17 residues, 1-17 (MFHLYLLLVFETRYTCL), serve as a signal peptide directing secretion. The RxLR motif lies at 28–31 (RWLR).

This sequence belongs to the RxLR effector family.

The protein resides in the secreted. It localises to the host nucleus. Secreted effector that acts as an elicitor that induces cell death in host plant cells. This Plasmopara viticola (Downy mildew of grapevine) protein is Secreted RxLR effector protein 82.